The primary structure comprises 129 residues: MADSSNNEKAKPLADSKLTLTILDLIQQSNNLGQLKKGANECTKAVSRSTAEFVVLAADAEPLEILLHIPLLCEDKNIPYVFVSSKSELGRACDVSRPVVACAVTVDDKSQLKSQITNVKDSLDRLWIV.

This sequence belongs to the eukaryotic ribosomal protein eL8 family.

The protein resides in the nucleus. The protein localises to the nucleolus. Binds to the 5'-stem-loop of U4 snRNA and may play a role in the late stage of spliceosome assembly. The protein undergoes a conformational change upon RNA-binding. This Dictyostelium discoideum (Social amoeba) protein is NHP2-like protein 1 homolog.